The primary structure comprises 511 residues: Neuronal acetylcholine receptor subunit alpha-2 (511 aa).

The first 27 residues, 1-27, serve as a signal peptide directing secretion; it reads MTLSHSALQFWTHLYLWCLLLVPAVLT. At 28–241 the chain is on the extracellular side; it reads QQGSHTHAED…VTYYFVIRRL (214 aa). Residues Asn-56 and Asn-106 are each glycosylated (N-linked (GlcNAc...) asparagine). Cys-160 and Cys-174 are oxidised to a cystine. Asn-212 carries N-linked (GlcNAc...) asparagine glycosylation. Residues Cys-224 and Cys-225 are joined by a disulfide bond. The next 3 membrane-spanning stretches (helical) occupy residues 242–266, 274–292, and 308–329; these read PLFY…VFYL, ITLC…LLIT, and YLLF…VLNV. Residues 330–484 lie on the Cytoplasmic side of the membrane; it reads HHRSPSTHNM…WKYVAMVVDR (155 aa). A helical transmembrane segment spans residues 485 to 503; that stretch reads IFLWLFIIVCFLGTIGLFL.

Belongs to the ligand-gated ion channel (TC 1.A.9) family. Acetylcholine receptor (TC 1.A.9.1) subfamily. Alpha-2/CHRNA2 sub-subfamily. Neuronal AChR seems to be composed of two different types of subunits: alpha and non-alpha (beta). CHRNA2/Alpha-2 subunit can be combined to CHRNB2/beta-2 or CHRNB4/beta-4 to give rise to functional receptors. The alpha-2:beta-2 nAChR complex is proposed to be a heteropentamer with two subtypes: LS (low agonist sensitivity) with a (alpha-2)3:(beta-2)2 and HS (high agonist sensitivity) with a (alpha-2)2:(beta-2)3 stoichiometry; the subtypes differ in their subunit binding interfaces which are involved in ligand binding.

It is found in the synaptic cell membrane. The protein localises to the cell membrane. It catalyses the reaction Ca(2+)(in) = Ca(2+)(out). It carries out the reaction K(+)(in) = K(+)(out). The enzyme catalyses Na(+)(in) = Na(+)(out). Its function is as follows. Component of neuronal acetylcholine receptors (nAChRs) that function as pentameric, ligand-gated cation channels with high calcium permeability among other activities. nAChRs are excitatory neurotrasnmitter receptors formed by a collection of nAChR subunits known to mediate synaptic transmission in the nervous system and the neuromuscular junction. Each nAchR subunit confers differential attributes to channel properties, including activation, deactivation and desensitization kinetics, pH sensitivity, cation permeability, and binding to allosteric modulators. CHRNA2 forms heteropentameric neuronal acetylcholine receptors with CHRNB2 and CHRNB4 and plays a role in nicotine dependence. The polypeptide is Neuronal acetylcholine receptor subunit alpha-2 (Chrna2) (Rattus norvegicus (Rat)).